Consider the following 795-residue polypeptide: ATP-dependent RNA helicase DHX15 (795 aa).

The segment at 1–111 is disordered; sequence MSKRHRLDLG…HTGHTGHTSL (111 aa). Ser15 is subject to Phosphoserine. A compositionally biased stretch (basic and acidic residues) spans 20-62; that stretch reads AGTDGKDRERDRDREDRSKDRDRERDRGDREREREKEKEKELR. A compositionally biased stretch (low complexity) spans 79–110; sequence ASHSAHSTHSAHSTHSTHSAHSTHTGHTGHTS. The 167-residue stretch at 147–313 folds into the Helicase ATP-binding domain; the sequence is TDILVRHQSF…FDNCPLLTIP (167 aa). 160–167 provides a ligand contact to ATP; that stretch reads GETGSGKT. A DEAH box motif is present at residues 260–263; sequence DEAH. Residues 338–518 enclose the Helicase C-terminal domain; sequence TVIQIHMCEE…SVVLQLKKLG (181 aa). Position 488 is an N6-acetyllysine (Lys488). A Glycyl lysine isopeptide (Lys-Gly) (interchain with G-Cter in SUMO2) cross-link involves residue Lys786.

The protein belongs to the DEAD box helicase family. DEAH subfamily. DDX15/PRP43 sub-subfamily. Component of the U11/U12 snRNPs that are part of the U12-type spliceosome. Identified in the Intron Large spliceosome complex (IL, also named intron lariat spliceosome), a post-mRNA release spliceosomal complex containing the excised intron, U2, U5 and U6 snRNPs, and splicing factors; the association may be transient. The IL complex exists in two distinct conformations, one with the DHX15 (ILS2) and one without (ILS1). Interacts with TFIP11 (via G-patch domain); indicative for a recruitment to the IL complex. Interacts with SSB/La. Interacts with GPATCH2 (via G-patch domain); promoting the RNA helicase activity. Interacts with NKRF (via G-patch domain); promoting the RNA helicase activity. Interacts with NLRP6. As to expression, ubiquitous.

Its subcellular location is the nucleus. The protein resides in the nucleolus. The catalysed reaction is ATP + H2O = ADP + phosphate + H(+). ATPase activity is enhanced upon binding to G-patch domain-containing proteins. G-patch domain-containing proteins act like a brace that tethers mobile sections of DHX15 together, stabilizing a functional conformation with high RNA affinity, thereby promoting the ATPase activity. RNA helicase involved in mRNA processing and antiviral innate immunity. Pre-mRNA processing factor involved in disassembly of spliceosomes after the release of mature mRNA. In cooperation with TFIP11 seem to be involved in the transition of the U2, U5 and U6 snRNP-containing IL complex to the snRNP-free IS complex leading to efficient debranching and turnover of excised introns. Plays a key role in antiviral innate immunity by promoting both MAVS-dependent signaling and NLRP6 inflammasome. Acts as an RNA virus sensor: recognizes and binds viral double stranded RNA (dsRNA) and activates the MAVS-dependent signaling to produce interferon-beta and interferon lambda-3 (IFNL3). Involved in intestinal antiviral innate immunity together with NLRP6: recognizes and binds viral dsRNA and promotes activation of the NLRP6 inflammasome in intestinal epithelial cells to restrict infection by enteric viruses. The NLRP6 inflammasome acts by promoting maturation and secretion of IL18 in the extracellular milieu. Also involved in antibacterial innate immunity by promoting Wnt-induced antimicrobial protein expression in Paneth cells. This is ATP-dependent RNA helicase DHX15 from Mus musculus (Mouse).